Consider the following 503-residue polypeptide: Alpha-1-syntrophin (503 aa).

PH domains are found at residues 6 to 263 and 287 to 399; these read RAPR…AQIG and DIKQ…DGCH. Positions 40–68 are disordered; it reads LTVSPADGEPGPEPEPAQLNGAAEPGAAP. A PDZ domain is found at 81–164; that stretch reads RVTVRKADAG…EVVLEVKYMK (84 aa). Phosphoserine is present on residues Ser95, Ser178, Ser183, Ser187, and Ser194. The disordered stretch occupies residues 177 to 203; it reads TSVGWDSPPASPLQRQPSSPGPQPRNL. The region spanning 447 to 503 is the SU domain; it reads PFEKLQMSSDDGTSLLFLDFGGAEGEIQLDLHSCPKTMVFIIHSFLSAKVTRLGLLA. The tract at residues 481–503 is calmodulin-binding; the sequence is PKTMVFIIHSFLSAKVTRLGLLA.

It belongs to the syntrophin family. In terms of assembly, monomer and homodimer. Interacts with MAPK12, TGFA, GA and F-actin. Interacts with the other members of the syntrophin family: SNTB1 and SNTB2; with dystrophin protein DMD and related proteins DTNA and UTRN; SGCG and SGCA of the dystrophin glycoprotein complex; NOS1; GRB2; calmodulin and the sodium channel proteins SCN4A and SCN5A. Interacts with MYOC; regulates muscle hypertrophy. Interacts with DTNB. In terms of processing, phosphorylated by CaM-kinase II. Phosphorylation may inhibit the interaction with DMD. As to expression, high expression in skeletal muscle. Expressed at intermediate level in heart, kidney and brain, and at low level in intestine, liver, lung and testis.

The protein resides in the cell membrane. Its subcellular location is the sarcolemma. It is found in the cell junction. It localises to the cytoplasm. The protein localises to the cytoskeleton. Functionally, adapter protein that binds to and probably organizes the subcellular localization of a variety of membrane proteins. May link various receptors to the actin cytoskeleton and the extracellular matrix via the dystrophin glycoprotein complex. Plays an important role in synapse formation and in the organization of UTRN and acetylcholine receptors at the neuromuscular synapse. Binds to phosphatidylinositol 4,5-bisphosphate. The sequence is that of Alpha-1-syntrophin (Snta1) from Mus musculus (Mouse).